Consider the following 145-residue polypeptide: Large ribosomal subunit protein bL19 (145 aa).

This sequence belongs to the bacterial ribosomal protein bL19 family.

In terms of biological role, this protein is located at the 30S-50S ribosomal subunit interface and may play a role in the structure and function of the aminoacyl-tRNA binding site. This chain is Large ribosomal subunit protein bL19, found in Brucella anthropi (strain ATCC 49188 / DSM 6882 / CCUG 24695 / JCM 21032 / LMG 3331 / NBRC 15819 / NCTC 12168 / Alc 37) (Ochrobactrum anthropi).